The primary structure comprises 359 residues: Peptide chain release factor 1 (359 aa).

Residue Q233 is modified to N5-methylglutamine.

Belongs to the prokaryotic/mitochondrial release factor family. In terms of processing, methylated by PrmC. Methylation increases the termination efficiency of RF1.

It localises to the cytoplasm. Peptide chain release factor 1 directs the termination of translation in response to the peptide chain termination codons UAG and UAA. This is Peptide chain release factor 1 from Orientia tsutsugamushi (strain Boryong) (Rickettsia tsutsugamushi).